The sequence spans 362 residues: Peptide chain release factor 1 (362 aa).

Position 237 is an N5-methylglutamine (glutamine 237).

Belongs to the prokaryotic/mitochondrial release factor family. Post-translationally, methylated by PrmC. Methylation increases the termination efficiency of RF1.

It is found in the cytoplasm. Peptide chain release factor 1 directs the termination of translation in response to the peptide chain termination codons UAG and UAA. In Vibrio parahaemolyticus serotype O3:K6 (strain RIMD 2210633), this protein is Peptide chain release factor 1.